A 1762-amino-acid chain; its full sequence is Lysine-specific demethylase 3B (1762 aa).

Ala2 bears the N-acetylalanine mark. 2 disordered regions span residues 253-350 and 426-468; these read MDSS…FVPQ and TTAS…NSSL. Positions 299 to 310 are enriched in basic and acidic residues; the sequence is ATKKLKGDRGEV. Residues 426–435 show a composition bias toward low complexity; the sequence is TTASSTPTTV. Residues 453 to 465 show a composition bias toward polar residues; it reads GSWSQASGENSRN. Phosphoserine occurs at positions 493, 547, 557, and 561. Residues 574–613 are disordered; sequence SVLGADTQPGPKAGSSVDRKVPAESMPTLTPAFPRSLLNT. Position 615 is a phosphothreonine (Thr615). A compositionally biased stretch (polar residues) spans 713–746; that stretch reads TGSPSLSAVGNGRSSSPTNSLTQPIEMPTLSSSP. Residues 713–763 form a disordered region; the sequence is TGSPSLSAVGNGRSSSPTNSLTQPIEMPTLSSSPTEERPTVGPGQQDNPLL. A phosphoserine mark is found at Ser767, Ser774, and Ser779. Residue Lys789 forms a Glycyl lysine isopeptide (Lys-Gly) (interchain with G-Cter in SUMO2) linkage. Ser799 is modified (phosphoserine). The tract at residues 806-853 is disordered; sequence ACRQDSDSSTNSDLSDLSDSEEQLQAKSGLKGIPEHLMGKLGPNGERS. Residues 1032–1057 form a C6-type zinc finger; that stretch reads CDVCETTLFNIHWVCRKCGFGVCLDC. Residues 1146–1163 are compositionally biased toward polar residues; that stretch reads QLPSVTPSASSGNETTFS. The disordered stretch occupies residues 1146–1217; sequence QLPSVTPSAS…AIRPPCPDTA (72 aa). Residues Ser1254 and Ser1260 each carry the phosphoserine modification. The tract at residues 1285 to 1306 is disordered; sequence SNSKTEGSSLRDLLHSGPGKLP. Residues 1294–1298 carry the LXXLL motif motif; that stretch reads LRDLL. In terms of domain architecture, JmjC spans 1499–1722; that stretch reads MPTRFEDLME…HCFRLTQEFR (224 aa). Fe cation contacts are provided by His1561, Asp1563, and His1690.

This sequence belongs to the JHDM2 histone demethylase family. The cofactor is Fe(2+).

Its subcellular location is the nucleus. It catalyses the reaction N(6),N(6)-dimethyl-L-lysyl(9)-[histone H3] + 2 2-oxoglutarate + 2 O2 = L-lysyl(9)-[histone H3] + 2 formaldehyde + 2 succinate + 2 CO2. Histone demethylase that specifically demethylates 'Lys-9' of histone H3, thereby playing a central role in histone code. Demethylation of Lys residue generates formaldehyde and succinate May have tumor suppressor activity. This chain is Lysine-specific demethylase 3B (Kdm3b), found in Mus musculus (Mouse).